The primary structure comprises 101 residues: Rho GTPase-activating protein 39 (101 aa).

Residues 1–96 (YEQCIAHYES…VLIQHLDTSF (96 aa)) enclose the Rho-GAP domain.

As to expression, preoptic area and testis.

This is Rho GTPase-activating protein 39 (Arhgap39) from Rattus norvegicus (Rat).